The following is a 204-amino-acid chain: 3-isopropylmalate dehydratase small subunit (204 aa).

This sequence belongs to the LeuD family. LeuD type 1 subfamily. Heterodimer of LeuC and LeuD.

It catalyses the reaction (2R,3S)-3-isopropylmalate = (2S)-2-isopropylmalate. The protein operates within amino-acid biosynthesis; L-leucine biosynthesis; L-leucine from 3-methyl-2-oxobutanoate: step 2/4. Functionally, catalyzes the isomerization between 2-isopropylmalate and 3-isopropylmalate, via the formation of 2-isopropylmaleate. This is 3-isopropylmalate dehydratase small subunit from Chloroflexus aggregans (strain MD-66 / DSM 9485).